We begin with the raw amino-acid sequence, 176 residues long: NAD(P)H-quinone oxidoreductase subunit I, chloroplastic (176 aa).

4Fe-4S ferredoxin-type domains follow at residues 55 to 84 (GRIH…VDWE) and 95 to 124 (LNYS…MTEE). The [4Fe-4S] cluster site is built by cysteine 64, cysteine 67, cysteine 70, cysteine 74, cysteine 104, cysteine 107, cysteine 110, and cysteine 114.

Belongs to the complex I 23 kDa subunit family. In terms of assembly, NDH is composed of at least 16 different subunits, 5 of which are encoded in the nucleus. [4Fe-4S] cluster serves as cofactor.

Its subcellular location is the plastid. It localises to the chloroplast thylakoid membrane. The enzyme catalyses a plastoquinone + NADH + (n+1) H(+)(in) = a plastoquinol + NAD(+) + n H(+)(out). It carries out the reaction a plastoquinone + NADPH + (n+1) H(+)(in) = a plastoquinol + NADP(+) + n H(+)(out). Functionally, NDH shuttles electrons from NAD(P)H:plastoquinone, via FMN and iron-sulfur (Fe-S) centers, to quinones in the photosynthetic chain and possibly in a chloroplast respiratory chain. The immediate electron acceptor for the enzyme in this species is believed to be plastoquinone. Couples the redox reaction to proton translocation, and thus conserves the redox energy in a proton gradient. The chain is NAD(P)H-quinone oxidoreductase subunit I, chloroplastic from Populus alba (White poplar).